Consider the following 247-residue polypeptide: Phosphoribosylaminoimidazole-succinocarboxamide synthase (247 aa).

The protein belongs to the SAICAR synthetase family.

It catalyses the reaction 5-amino-1-(5-phospho-D-ribosyl)imidazole-4-carboxylate + L-aspartate + ATP = (2S)-2-[5-amino-1-(5-phospho-beta-D-ribosyl)imidazole-4-carboxamido]succinate + ADP + phosphate + 2 H(+). It participates in purine metabolism; IMP biosynthesis via de novo pathway; 5-amino-1-(5-phospho-D-ribosyl)imidazole-4-carboxamide from 5-amino-1-(5-phospho-D-ribosyl)imidazole-4-carboxylate: step 1/2. This chain is Phosphoribosylaminoimidazole-succinocarboxamide synthase, found in Methanopyrus kandleri (strain AV19 / DSM 6324 / JCM 9639 / NBRC 100938).